A 143-amino-acid chain; its full sequence is Large ribosomal subunit protein uL15 (143 aa).

This sequence belongs to the universal ribosomal protein uL15 family. Part of the 50S ribosomal subunit.

Functionally, binds to the 23S rRNA. The chain is Large ribosomal subunit protein uL15 from Methanococcus aeolicus (strain ATCC BAA-1280 / DSM 17508 / OCM 812 / Nankai-3).